The chain runs to 411 residues: Cladofulvin cluster transcriptional coactivator claA (411 aa).

The segment covering 1-27 (MSDSLAGNGMRQNLNRSSTSSNHTGHA) has biased composition (polar residues). The disordered stretch occupies residues 1 to 32 (MSDSLAGNGMRQNLNRSSTSSNHTGHAQNGRA). One can recognise an HTH iclR-type domain in the interval 47-117 (LACQVQSLAC…DPGHIAHTAL (71 aa)). A DNA-binding region (H-T-H motif) is located at residues 77–96 (LHDVAELANVPASQLSRVVR).

The protein localises to the nucleus. Transcriptional coactivator; part of the gene cluster that mediates the biosynthesis of cladofulvin, a conidial pigment not required for virulence but that plays a role in fitness and resistance to environmental stresses including UV light and low-temperature stress. With claE, coregulates the production of cladofulvin. This Passalora fulva (Tomato leaf mold) protein is Cladofulvin cluster transcriptional coactivator claA.